We begin with the raw amino-acid sequence, 346 residues long: Selenide, water dikinase (346 aa).

Residue selenocysteine 17 is part of the active site. Selenocysteine 17 is a non-standard amino acid (selenocysteine). ATP contacts are provided by residues lysine 20 and 47–49; that span reads TSD. Aspartate 50 contacts Mg(2+). ATP contacts are provided by residues aspartate 67, aspartate 90, and 138-140; that span reads GHT. Aspartate 90 lines the Mg(2+) pocket. Residue aspartate 226 participates in Mg(2+) binding.

This sequence belongs to the selenophosphate synthase 1 family. Class I subfamily. Homodimer. Mg(2+) serves as cofactor.

The catalysed reaction is hydrogenselenide + ATP + H2O = selenophosphate + AMP + phosphate + 2 H(+). In terms of biological role, synthesizes selenophosphate from selenide and ATP. In Trichlorobacter lovleyi (strain ATCC BAA-1151 / DSM 17278 / SZ) (Geobacter lovleyi), this protein is Selenide, water dikinase.